Consider the following 373-residue polypeptide: Packaging protein 3 (373 aa).

The disordered stretch occupies residues Met-1–Pro-32. The tract at residues Met-1 to Ser-150 is interaction with packaging protein 1. Ser-52 and Ser-334 each carry phosphoserine; by host.

The protein belongs to the adenoviridae packaging protein 3 family. In terms of assembly, part of the genome packaging complex composed of packaging proteins 1, 2 and 3; this complex specifically binds to the packaging sequence on the left end of viral genomic DNA and performs packaging of the viral genome. Interacts with hexon-linking protein IIIa; this interaction is required to promote correct genome packaging. Post-translationally, cleaved at different sites by the viral protease during virion maturation.

The protein localises to the host nucleus. Involved in viral genome packaging through its interaction with packaging proteins 1 and 2. After proteolytic cleavage by adenovirus protease, L1 52/55k protein is removed from the capsid during viral maturation. This Homo sapiens (Human) protein is Packaging protein 3.